We begin with the raw amino-acid sequence, 233 residues long: Protein lin-7 homolog A (233 aa).

Positions 14 to 28 match the Kinase interacting site motif; it reads MATLTVVQPLTLDRD. The 56-residue stretch at 25-80 folds into the L27 domain; it reads LDRDVARAIELLEKLQESGEVPVHKLQSLKKVLQSEFCTAIREVYQYMHETITVNG. The PDZ domain maps to 108-190; the sequence is VVELPKTDEG…SVKLVVRYTP (83 aa). Positions 214 to 233 are disordered; it reads LLIQQQQQQQQQQPQQNHMS.

Belongs to the lin-7 family. In terms of assembly, forms a complex with CASK and CASKIN1. Component of the brain-specific heterotrimeric complex (LIN-10-LIN-2-LIN-7 complex) composed of at least APBA1, CASK, and LIN7, which associates with the motor protein KIF17 to transport vesicles along microtubules. Can also interact with other modular proteins containing protein-protein interaction domains like PALS1, PALS2, MPP7, DLG1, DLG2 and DLG3 through its L27 domain. Interacts with DLG4, GRIN2B and MARCHF11 as well as CDH1 and CTNNB1, the channels KCNJ12/Kir2.2, KCNJ4/Kir2.3 and probably KCNJ2/Kir2.1 and SLC6A12/BGT-1 via its PDZ domain. The association of LIN7A with cadherin and beta-catenin is calcium-dependent, occurs at synaptic junctions and requires the actin cytoskeleton. Interacts with EGFR, ERBB2, ERBB3 and ERBB4 with both PDZ and KID domains. Associates with KIF17 via APBA1. Interacts with HTR4. Forms a tripartite complex composed of DLG1, MPP7 and LIN7 (LIN7A or LIN7C). Expressed in the kidney, along the length of the nephron.

It localises to the cell membrane. Its subcellular location is the basolateral cell membrane. The protein localises to the cell junction. The protein resides in the postsynaptic density membrane. It is found in the tight junction. Functionally, plays a role in establishing and maintaining the asymmetric distribution of channels and receptors at the plasma membrane of polarized cells. Forms membrane-associated multiprotein complexes that may regulate delivery and recycling of proteins to the correct membrane domains. The tripartite complex composed of LIN7 (LIN7A, LIN7B or LIN7C), CASK and APBA1 associates with the motor protein KIF17 to transport vesicles containing N-methyl-D-aspartate (NMDA) receptor subunit NR2B along microtubules. This complex may have the potential to couple synaptic vesicle exocytosis to cell adhesion in brain. Ensures the proper localization of GRIN2B (subunit 2B of the NMDA receptor) to neuronal postsynaptic density and may function in localizing synaptic vesicles at synapses where it is recruited by beta-catenin and cadherin. Required to localize Kir2 channels, GABA transporter (SLC6A12) and EGFR/ERBB1, ERBB2, ERBB3 and ERBB4 to the basolateral membrane of epithelial cells. The protein is Protein lin-7 homolog A (Lin7a) of Mus musculus (Mouse).